We begin with the raw amino-acid sequence, 277 residues long: ATP synthase subunit a (277 aa).

Helical transmembrane passes span 40–60 (AWHVDTLAWSIGLGLLFLIIF), 98–118 (SALIAPLALTIFVWVLLMNLM), 154–174 (DLNLTFALASGVFILILFYSI), 219–239 (LFGNLYASELIFILIATIGYF), and 245–265 (FMWAVFHILVLPLQAFIFMML).

The protein belongs to the ATPase A chain family. As to quaternary structure, F-type ATPases have 2 components, CF(1) - the catalytic core - and CF(0) - the membrane proton channel. CF(1) has five subunits: alpha(3), beta(3), gamma(1), delta(1), epsilon(1). CF(0) has three main subunits: a(1), b(2) and c(9-12). The alpha and beta chains form an alternating ring which encloses part of the gamma chain. CF(1) is attached to CF(0) by a central stalk formed by the gamma and epsilon chains, while a peripheral stalk is formed by the delta and b chains.

It localises to the cell inner membrane. In terms of biological role, key component of the proton channel; it plays a direct role in the translocation of protons across the membrane. The protein is ATP synthase subunit a of Alteromonas mediterranea (strain DSM 17117 / CIP 110805 / LMG 28347 / Deep ecotype).